The primary structure comprises 586 residues: Pyruvate kinase (586 aa).

Position 32 (Arg32) interacts with substrate. Residues Asn34, Ser36, Asp66, and Thr67 each coordinate K(+). 34-37 (NFSH) contacts ATP. 2 residues coordinate ATP: Arg73 and Lys156. Glu222 contributes to the Mg(2+) binding site. Substrate is bound by residues Gly245, Asp246, and Thr278. Residue Asp246 coordinates Mg(2+).

This sequence belongs to the pyruvate kinase family. The protein in the C-terminal section; belongs to the PEP-utilizing enzyme family. As to quaternary structure, homotetramer. The cofactor is Mg(2+). Requires K(+) as cofactor.

It catalyses the reaction pyruvate + ATP = phosphoenolpyruvate + ADP + H(+). It functions in the pathway carbohydrate degradation; glycolysis; pyruvate from D-glyceraldehyde 3-phosphate: step 5/5. This chain is Pyruvate kinase (pyk), found in Sporosarcina psychrophila (Bacillus psychrophilus).